The primary structure comprises 246 residues: Bis(5'-nucleosyl)-tetraphosphatase PrpE [asymmetrical] (246 aa).

Belongs to the PrpE family. Ni(2+) serves as cofactor.

It catalyses the reaction P(1),P(4)-bis(5'-guanosyl) tetraphosphate + H2O = GMP + GTP + 2 H(+). Asymmetrically hydrolyzes Ap4p to yield AMP and ATP. This is Bis(5'-nucleosyl)-tetraphosphatase PrpE [asymmetrical] from Bacillus mycoides (strain KBAB4) (Bacillus weihenstephanensis).